Here is an 814-residue protein sequence, read N- to C-terminus: S-layer protein sap (814 aa).

A signal peptide spans 1–29; the sequence is MAKTNSYKKVIAGTMTAAMVAGVVSPVAA. 3 SLH domains span residues 30-93, 94-150, and 152-214; these read AGKT…DAKP, SFAD…KVNG, and PATK…AAKV. Positions 403–479 constitute a BIG2 domain; the sequence is FTSKDFKQNN…TVKDSKGKEL (77 aa).

Probably glycosylated.

It localises to the secreted. The protein resides in the cell wall. It is found in the S-layer. Its function is as follows. The S-layer is a paracrystalline mono-layered assembly of proteins which coat the surface of bacteria. This is S-layer protein sap (sap) from Bacillus anthracis.